The sequence spans 125 residues: Small ribosomal subunit protein uS13 (125 aa).

The disordered stretch occupies residues 92-125 (RRSLPVRGQNTQTNARTRKGKRKTVAGKKKAARK). Basic residues predominate over residues 107–125 (RTRKGKRKTVAGKKKAARK).

This sequence belongs to the universal ribosomal protein uS13 family. In terms of assembly, part of the 30S ribosomal subunit. Forms a loose heterodimer with protein S19. Forms two bridges to the 50S subunit in the 70S ribosome.

Located at the top of the head of the 30S subunit, it contacts several helices of the 16S rRNA. In the 70S ribosome it contacts the 23S rRNA (bridge B1a) and protein L5 of the 50S subunit (bridge B1b), connecting the 2 subunits; these bridges are implicated in subunit movement. Contacts the tRNAs in the A and P-sites. This Chlorobium luteolum (strain DSM 273 / BCRC 81028 / 2530) (Pelodictyon luteolum) protein is Small ribosomal subunit protein uS13.